A 35-amino-acid polypeptide reads, in one-letter code: Phosphoribulokinase (35 aa).

It belongs to the phosphoribulokinase family.

The protein localises to the plastid. It localises to the chloroplast. The catalysed reaction is D-ribulose 5-phosphate + ATP = D-ribulose 1,5-bisphosphate + ADP + H(+). The protein operates within carbohydrate biosynthesis; Calvin cycle. Light regulated via thioredoxin by reversible oxidation/reduction of sulfhydryl/disulfide groups. The sequence is that of Phosphoribulokinase from Pinus pinaster (Maritime pine).